The following is a 176-amino-acid chain: Translation initiation factor IF-3 (176 aa).

This sequence belongs to the IF-3 family. As to quaternary structure, monomer.

The protein resides in the cytoplasm. Functionally, IF-3 binds to the 30S ribosomal subunit and shifts the equilibrium between 70S ribosomes and their 50S and 30S subunits in favor of the free subunits, thus enhancing the availability of 30S subunits on which protein synthesis initiation begins. The chain is Translation initiation factor IF-3 from Rippkaea orientalis (strain PCC 8801 / RF-1) (Cyanothece sp. (strain PCC 8801)).